A 531-amino-acid chain; its full sequence is MKITFISGQEVSLGTSFLLFSKKIVMNELNQPLLAIIKNVAKTKNLSIEEVVFCLKTALEQAYKKHLNFVNVEVNINFDKGIINVEQLFNVVSDENEDYDDFLEIPLQAANKINSSLQLGDVLRKPIPLKNISSDLINKMIAIFNQKISETNFKAVMSEFSSEVGEVIEAKVEDIDTNKEGGLKGYIINLETTKGYISKRELSKGERLEIGKKYLFVIKEIQRQASLWPITLSRSDTRLLQFLLTSNTPEIENGTIVIKKIERSPGVKSKIAVISNDPAVDPVAAILGPKGEKIRGISEEFNGEIIDIVFWNEDKLKFLINAILPAEVIGYNILQDDERDTSIEVVVPANQIANVFGFKGVNIRLISNLTGWNSVDVYSEKDASEANIKFTRLSFEPEGLFGIKKRREKIISNDATDKVFYTSKDNVIDDEIIVDLAKDLMVDNKQKQPEQVAKQVVEKSQLEKQVTPKEKEKVQPKAKVHSNSHSKKPAKPNQIFSITVDASDKNLKKDQVDNNQTNPQTKQTFDSFDDL.

The S1 motif domain occupies 165-235 (GEVIEAKVED…SLWPITLSRS (71 aa)). The 71-residue stretch at 340–410 (DTSIEVVVPA…FGIKKRREKI (71 aa)) folds into the KH domain. Basic and acidic residues predominate over residues 463–475 (EKQVTPKEKEKVQ). A disordered region spans residues 463 to 531 (EKQVTPKEKE…KQTFDSFDDL (69 aa)). Residues 476-490 (PKAKVHSNSHSKKPA) show a composition bias toward basic residues. The span at 502 to 512 (ASDKNLKKDQV) shows a compositional bias: basic and acidic residues. Polar residues predominate over residues 513–531 (DNNQTNPQTKQTFDSFDDL).

The protein belongs to the NusA family. In terms of assembly, monomer. Binds directly to the core enzyme of the DNA-dependent RNA polymerase and to nascent RNA.

The protein resides in the cytoplasm. Functionally, participates in both transcription termination and antitermination. The chain is Transcription termination/antitermination protein NusA from Mycoplasma genitalium (strain ATCC 33530 / DSM 19775 / NCTC 10195 / G37) (Mycoplasmoides genitalium).